The following is a 562-amino-acid chain: Dihydroxy-acid dehydratase (562 aa).

D80 lines the Mg(2+) pocket. Residue C121 coordinates [2Fe-2S] cluster. Mg(2+) is bound by residues D122 and K123. K123 is modified (N6-carboxylysine). Position 194 (C194) interacts with [2Fe-2S] cluster. Mg(2+) is bound at residue E446. S472 acts as the Proton acceptor in catalysis.

Belongs to the IlvD/Edd family. As to quaternary structure, homodimer. The cofactor is [2Fe-2S] cluster. Requires Mg(2+) as cofactor.

The enzyme catalyses (2R)-2,3-dihydroxy-3-methylbutanoate = 3-methyl-2-oxobutanoate + H2O. The catalysed reaction is (2R,3R)-2,3-dihydroxy-3-methylpentanoate = (S)-3-methyl-2-oxopentanoate + H2O. It participates in amino-acid biosynthesis; L-isoleucine biosynthesis; L-isoleucine from 2-oxobutanoate: step 3/4. Its pathway is amino-acid biosynthesis; L-valine biosynthesis; L-valine from pyruvate: step 3/4. In terms of biological role, functions in the biosynthesis of branched-chain amino acids. Catalyzes the dehydration of (2R,3R)-2,3-dihydroxy-3-methylpentanoate (2,3-dihydroxy-3-methylvalerate) into 2-oxo-3-methylpentanoate (2-oxo-3-methylvalerate) and of (2R)-2,3-dihydroxy-3-methylbutanoate (2,3-dihydroxyisovalerate) into 2-oxo-3-methylbutanoate (2-oxoisovalerate), the penultimate precursor to L-isoleucine and L-valine, respectively. The protein is Dihydroxy-acid dehydratase of Staphylococcus aureus (strain USA300 / TCH1516).